The chain runs to 367 residues: Lysophosphatidic acid receptor 5 (367 aa).

Residues 1 to 25 are Extracellular-facing; the sequence is MQANSSAKSLPTECPDYQPIHHLHL. Residue asparagine 4 is glycosylated (N-linked (GlcNAc...) asparagine). The chain crosses the membrane as a helical span at residues 26 to 46; sequence VVYSVVLAAGLPLNALALWVF. The Cytoplasmic segment spans residues 47-54; sequence LRALRVHS. A helical transmembrane segment spans residues 55 to 75; it reads VVSVYMCNLAASDLLFTLSLP. The Extracellular segment spans residues 76–95; that stretch reads LRLSYYARHYWPFPDFLCQL. Cysteines 93 and 174 form a disulfide. Residues 96-116 traverse the membrane as a helical segment; the sequence is AGAVFQMNMYGSCIFLTLINV. The Cytoplasmic portion of the chain corresponds to 117-135; the sequence is DRYAAIVHPLRLRHLRRPR. The helical transmembrane segment at 136-156 threads the bilayer; it reads VARLLCLGVWALILVFAVPTI. Over 157 to 186 the chain is Extracellular; it reads LAHQPSSCARDGRNVSLCFESFSDKLWKGS. Asparagine 170 carries an N-linked (GlcNAc...) asparagine glycan. The helical transmembrane segment at 187–207 threads the bilayer; the sequence is LLPLLLLAEALGFLLPLAAVV. Residues 208 to 238 lie on the Cytoplasmic side of the membrane; that stretch reads YSSGRVFWTLARPDATRSQRRRKTVRLLLAS. A helical membrane pass occupies residues 239–259; sequence LVIFLLCFVPYNATLAVYGLL. The Extracellular portion of the chain corresponds to 260–275; the sequence is RGEVVPASSEARKKVR. A helical transmembrane segment spans residues 276–296; the sequence is GVLMVMVLLAGANCVLDPLVY. Residues 297–367 lie on the Cytoplasmic side of the membrane; it reads YFSAEGFRNT…FTPSHEDSSF (71 aa). The segment covering 332 to 350 has biased composition (low complexity); sequence LTETAHASTLTTTSQGQLQ. Residues 332–367 form a disordered region; it reads LTETAHASTLTTTSQGQLQPSDPRSSFTPSHEDSSF. Over residues 351-360 the composition is skewed to polar residues; that stretch reads PSDPRSSFTP.

The protein belongs to the G-protein coupled receptor 1 family.

It localises to the cell membrane. Its function is as follows. Receptor for lysophosphatidic acid (LPA), a mediator of diverse cellular activities. This Bos taurus (Bovine) protein is Lysophosphatidic acid receptor 5 (LPAR5).